We begin with the raw amino-acid sequence, 434 residues long: Angio-associated migratory cell protein (434 aa).

The disordered stretch occupies residues 1-63 (MESESESGAA…EEEEEEGNEE (63 aa)). Ser-20 bears the Phosphoserine mark. The span at 39-62 (DPDDLAQEMEDVDFEEEEEEEGNE) shows a compositional bias: acidic residues. WD repeat units lie at residues 89–129 (LHSA…LLFE), 132–171 (GHKDSVTCAGFSHDSTLVATGDMSGLLKVWQVDTKEEVWS), 173–212 (EAGDLEWMEWHPRAPVLLAGTADGNTWMWKVPNGDCKTFQ), 214–254 (PNCP…HVLK), 258–299 (GHQG…GVFR), 315–354 (SESNSVESLGFCSVMPLAAVGYLDGTLAIYDLATQTLRHQ), 356–395 (QHQSGIVQLLWEAGTAVVYTCSLDGIVRLWDARTGRLLTD), and 398–433 (GHTAEILDFALSKDASLVVTTSGDHKAKVFCVQRPD).

As to expression, expressed in metastatic melanoma, liver, skin, kidney, heart, lung, lymph node, skeletal muscle and brain, and also in A2058 melanoma cells and activated T-cells (at protein level). Expressed in blood vessels. Strongly expressed in endothelial cells, cytotrophoblasts, and poorly differentiated. colon adenocarcinoma cells found in lymphatics.

It localises to the cell membrane. The protein localises to the cytoplasm. Functionally, plays a role in angiogenesis and cell migration. In smooth muscle cell migration, may act through the RhoA pathway. This chain is Angio-associated migratory cell protein (AAMP), found in Homo sapiens (Human).